A 416-amino-acid polypeptide reads, in one-letter code: Cysteate synthase (416 aa).

K104 bears the N6-(pyridoxal phosphate)lysine mark. Position 130 (N130) interacts with pyridoxal 5'-phosphate.

It belongs to the threonine synthase family. Cysteate synthase subfamily. As to quaternary structure, homotrimer. Pyridoxal 5'-phosphate is required as a cofactor.

The enzyme catalyses O-phospho-L-serine + sulfite + H(+) = L-cysteate + phosphate. Its pathway is cofactor biosynthesis; coenzyme M biosynthesis. With respect to regulation, is inhibited by AP3 (DL-2-amino-3-phosphonopropionate) and, to a lesser extent, by L-aspartate or AP4 (DL-2-amino-4-phosphonobutyrate). Is also inhibited by EDTA in vitro. In terms of biological role, specifically catalyzes the beta-elimination of phosphate from L-phosphoserine and the beta-addition of sulfite to the dehydroalanine intermediate to produce L-cysteate. Does not display threonine synthase activity like the paralog protein ThrC. The protein is Cysteate synthase of Methanosarcina acetivorans (strain ATCC 35395 / DSM 2834 / JCM 12185 / C2A).